The chain runs to 93 residues: RNA-binding protein Hfq (93 aa).

One can recognise a Sm domain in the interval 11 to 71 (DVFLNHVRKS…ISTVMPGAPI (61 aa)).

The protein belongs to the Hfq family. In terms of assembly, homohexamer.

In terms of biological role, RNA chaperone that binds small regulatory RNA (sRNAs) and mRNAs to facilitate mRNA translational regulation in response to envelope stress, environmental stress and changes in metabolite concentrations. Also binds with high specificity to tRNAs. This is RNA-binding protein Hfq from Granulibacter bethesdensis (strain ATCC BAA-1260 / CGDNIH1).